A 429-amino-acid chain; its full sequence is Histidine--tRNA ligase (429 aa).

This sequence belongs to the class-II aminoacyl-tRNA synthetase family. As to quaternary structure, homodimer.

It is found in the cytoplasm. The enzyme catalyses tRNA(His) + L-histidine + ATP = L-histidyl-tRNA(His) + AMP + diphosphate + H(+). In Pseudomonas putida (strain W619), this protein is Histidine--tRNA ligase.